Reading from the N-terminus, the 142-residue chain is Large ribosomal subunit protein uL13 (142 aa).

It belongs to the universal ribosomal protein uL13 family. Part of the 50S ribosomal subunit.

Functionally, this protein is one of the early assembly proteins of the 50S ribosomal subunit, although it is not seen to bind rRNA by itself. It is important during the early stages of 50S assembly. The protein is Large ribosomal subunit protein uL13 of Xylella fastidiosa (strain M23).